Here is an 89-residue protein sequence, read N- to C-terminus: Small ribosomal subunit protein uS15 (89 aa).

Belongs to the universal ribosomal protein uS15 family. Part of the 30S ribosomal subunit. Forms a bridge to the 50S subunit in the 70S ribosome, contacting the 23S rRNA.

One of the primary rRNA binding proteins, it binds directly to 16S rRNA where it helps nucleate assembly of the platform of the 30S subunit by binding and bridging several RNA helices of the 16S rRNA. Functionally, forms an intersubunit bridge (bridge B4) with the 23S rRNA of the 50S subunit in the ribosome. The protein is Small ribosomal subunit protein uS15 of Pseudomonas aeruginosa (strain LESB58).